A 102-amino-acid chain; its full sequence is UPF0213 protein Ent638_3592 (102 aa).

Residues 4–79 form the GIY-YIG domain; it reads VCWFLYLVRT…KQLTKRQKER (76 aa).

It belongs to the UPF0213 family.

This Enterobacter sp. (strain 638) protein is UPF0213 protein Ent638_3592.